Consider the following 439-residue polypeptide: Methylenetetrahydrofolate--tRNA-(uracil-5-)-methyltransferase TrmFO (439 aa).

Position 8–13 (8–13 (GAGLAG)) interacts with FAD.

It belongs to the MnmG family. TrmFO subfamily. The cofactor is FAD.

It localises to the cytoplasm. The catalysed reaction is uridine(54) in tRNA + (6R)-5,10-methylene-5,6,7,8-tetrahydrofolate + NADH + H(+) = 5-methyluridine(54) in tRNA + (6S)-5,6,7,8-tetrahydrofolate + NAD(+). It catalyses the reaction uridine(54) in tRNA + (6R)-5,10-methylene-5,6,7,8-tetrahydrofolate + NADPH + H(+) = 5-methyluridine(54) in tRNA + (6S)-5,6,7,8-tetrahydrofolate + NADP(+). In terms of biological role, catalyzes the folate-dependent formation of 5-methyl-uridine at position 54 (M-5-U54) in all tRNAs. This Lacticaseibacillus paracasei (strain ATCC 334 / BCRC 17002 / CCUG 31169 / CIP 107868 / KCTC 3260 / NRRL B-441) (Lactobacillus paracasei) protein is Methylenetetrahydrofolate--tRNA-(uracil-5-)-methyltransferase TrmFO.